Consider the following 167-residue polypeptide: Leptin (167 aa).

Residues 1 to 21 (MCWRPLCRFLWLWSYLSYVQA) form the signal peptide. C117 and C167 are joined by a disulfide.

It belongs to the leptin family.

The protein localises to the secreted. Functionally, key player in the regulation of energy balance and body weight control. Once released into the circulation, has central and peripheral effects by binding LEPR, found in many tissues, which results in the activation of several major signaling pathways. In the hypothalamus, acts as an appetite-regulating factor that induces a decrease in food intake and an increase in energy consumption by inducing anorexinogenic factors and suppressing orexigenic neuropeptides, also regulates bone mass and secretion of hypothalamo-pituitary-adrenal hormones. In the periphery, increases basal metabolism, influences reproductive function, regulates pancreatic beta-cell function and insulin secretion, is pro-angiogenic for endothelial cell and affects innate and adaptive immunity. In the arcuate nucleus of the hypothalamus, activates by depolarization POMC neurons inducing FOS and SOCS3 expression to release anorexigenic peptides and inhibits by hyperpolarization NPY neurons inducing SOCS3 with a consequent reduction on release of orexigenic peptides. In addition to its known satiety inducing effect, has a modulatory role in nutrient absorption. In the intestine, reduces glucose absorption by enterocytes by activating PKC and leading to a sequential activation of p38, PI3K and ERK signaling pathways which exerts an inhibitory effect on glucose absorption. Acts as a growth factor on certain tissues, through the activation of different signaling pathways increases expression of genes involved in cell cycle regulation such as CCND1, via JAK2-STAT3 pathway, or VEGFA, via MAPK1/3 and PI3K-AKT1 pathways. May also play an apoptotic role via JAK2-STAT3 pathway and up-regulation of BIRC5 expression. Pro-angiogenic, has mitogenic activity on vascular endothelial cells and plays a role in matrix remodeling by regulating the expression of matrix metalloproteinases (MMPs) and tissue inhibitors of metalloproteinases (TIMPs). In innate immunity, modulates the activity and function of neutrophils by increasing chemotaxis and the secretion of oxygen radicals. Increases phagocytosis by macrophages and enhances secretion of pro-inflammatory mediators. Increases cytotoxic ability of NK cells. Plays a pro-inflammatory role, in synergy with IL1B, by inducing NOS2 which promotes the production of IL6, IL8 and Prostaglandin E2, through a signaling pathway that involves JAK2, PI3K, MAP2K1/MEK1 and MAPK14/p38. In adaptive immunity, promotes the switch of memory T-cells towards T helper-1 cell immune responses. Increases CD4(+)CD25(-) T cells proliferation and reduces autophagy during TCR (T cell receptor) stimulation, through MTOR signaling pathway activation and BCL2 up-regulation. The chain is Leptin (Lep) from Mus musculus (Mouse).